A 310-amino-acid chain; its full sequence is Protease HtpX homolog (310 aa).

2 helical membrane passes run Ser7 to Gly27 and Ala29 to Ser49. His131 contributes to the Zn(2+) binding site. Residue Glu132 is part of the active site. Residue His135 participates in Zn(2+) binding. A run of 2 helical transmembrane segments spans residues Ile141–Ala161 and Pro178–Ile198. Glu207 is a binding site for Zn(2+). The disordered stretch occupies residues Leu277–Lys310. Residues Arg293–Lys310 show a composition bias toward basic and acidic residues.

The protein belongs to the peptidase M48B family. The cofactor is Zn(2+).

It is found in the cell inner membrane. This Desulfatibacillum aliphaticivorans protein is Protease HtpX homolog.